A 602-amino-acid polypeptide reads, in one-letter code: Type 2 DNA topoisomerase 6 subunit B (602 aa).

ATP-binding positions include Asn-40, Asp-71, 92-93 (SR), 102-109 (GQQGIGIS), and Lys-425.

Belongs to the TOP6B family. As to quaternary structure, homodimer. Heterotetramer of two Top6A and two Top6B chains.

It carries out the reaction ATP-dependent breakage, passage and rejoining of double-stranded DNA.. Relaxes both positive and negative superturns and exhibits a strong decatenase activity. The sequence is that of Type 2 DNA topoisomerase 6 subunit B from Archaeoglobus fulgidus (strain ATCC 49558 / DSM 4304 / JCM 9628 / NBRC 100126 / VC-16).